Consider the following 150-residue polypeptide: Arginine repressor (150 aa).

It belongs to the ArgR family.

It localises to the cytoplasm. It participates in amino-acid biosynthesis; L-arginine biosynthesis [regulation]. Functionally, regulates arginine biosynthesis genes. The sequence is that of Arginine repressor from Clostridium botulinum (strain Loch Maree / Type A3).